Consider the following 147-residue polypeptide: Mannitol-specific cryptic phosphotransferase enzyme IIA component (147 aa).

Residues 5-147 (DYFPESSISV…KQLADIISRG (143 aa)) enclose the PTS EIIA type-2 domain. Histidine 67 serves as the catalytic Tele-phosphohistidine intermediate. At histidine 67 the chain carries Phosphohistidine; by HPr.

The protein resides in the cytoplasm. Functionally, the phosphoenolpyruvate-dependent sugar phosphotransferase system (sugar PTS), a major carbohydrate active transport system, catalyzes the phosphorylation of incoming sugar substrates concomitantly with their translocation across the cell membrane. The enzyme II CmtAB PTS system is involved in D-mannitol transport. This chain is Mannitol-specific cryptic phosphotransferase enzyme IIA component (cmtB), found in Escherichia coli O157:H7.